The following is a 349-amino-acid chain: Protein pelota homolog (349 aa).

It belongs to the eukaryotic release factor 1 family. Pelota subfamily. Monomer. The cofactor is a divalent metal cation.

Its subcellular location is the cytoplasm. Its function is as follows. May function in recognizing stalled ribosomes, interact with stem-loop structures in stalled mRNA molecules, and effect endonucleolytic cleavage of the mRNA. May play a role in the release non-functional ribosomes and degradation of damaged mRNAs. Has endoribonuclease activity. This Nitrosopumilus maritimus (strain SCM1) protein is Protein pelota homolog.